Reading from the N-terminus, the 362-residue chain is MSGRELRHGYTTGACAAAAAAGAARMLRRQELADEAEIVLPRGERVAFRLHGQEFTETWATCHVVKDAGDDPDVTNGAEIHATVRREALNRPGARTMVFVTGGRGVGTITKPGLAVPVGEPAINPVPMRMITEAVKAEFSVVCLPQILTVTVSIPNGEELAKKTLNARLGIVGGLSILGTTGIVRPISAKAWTDTLDAAIDVALACGCRTLVLSTGRTSELVVQGALAGEHLREEACVMMGDHVGYALRACARKGAEQAVLAGQFAKLLKIACGHEQTHVSSSELDLRLLAEWIAATPAASHLASLVEGANTARQVLEASGNDPALMELVCSRAREAARLLAPSLRIKVLLAGYDSTVLYFG.

The protein belongs to the CbiD family.

It carries out the reaction Co-precorrin-5B + S-adenosyl-L-methionine = Co-precorrin-6A + S-adenosyl-L-homocysteine. The protein operates within cofactor biosynthesis; adenosylcobalamin biosynthesis; cob(II)yrinate a,c-diamide from sirohydrochlorin (anaerobic route): step 6/10. Its function is as follows. Catalyzes the methylation of C-1 in cobalt-precorrin-5B to form cobalt-precorrin-6A. The polypeptide is Cobalt-precorrin-5B C(1)-methyltransferase (Geobacter sulfurreducens (strain ATCC 51573 / DSM 12127 / PCA)).